Here is a 330-residue protein sequence, read N- to C-terminus: Mas-related G-protein coupled receptor member B8 (330 aa).

Residues 1 to 33 (MDSSFPDWNIEFREQNESYFMESSSCDMSLAMS) lie on the Extracellular side of the membrane. The N-linked (GlcNAc...) asparagine glycan is linked to N16. The helical transmembrane segment at 34–54 (LLSIIIAIIGLTGNVIVLQLL) threads the bilayer. Residues 55 to 62 (GFHMHRNA) are Cytoplasmic-facing. The helical transmembrane segment at 63-83 (FSVYIFNLSGANFLFLCTHIV) threads the bilayer. At 84 to 101 (FSLENLIRQFHYIDIHMA) the chain is on the extracellular side. A helical membrane pass occupies residues 102 to 122 (LFSVNVTILAYLAGVSMITAI). Residues 123 to 146 (SVEYWLSVLWPTWYHAQRPKHTST) lie on the Cytoplasmic side of the membrane. Residues 147–167 (VICTLLWVFSLLLTLWNWIIC) traverse the membrane as a helical segment. The Extracellular segment spans residues 168 to 177 (KVLDYIYNWD). The helical transmembrane segment at 178-198 (MCWKLALIIVVWLLVLFVVLS) threads the bilayer. At 199–219 (RSNQALLFRVFCGSQQTPVTR) the chain is on the cytoplasmic side. Residues 220–240 (LLVTIMLTALVVLICGFGIGI) traverse the membrane as a helical segment. The Extracellular segment spans residues 241–260 (CFFYWKKEENSIMPCGYFYE). Residues 261–281 (TILLLSGVNSCANPIICLFVG) form a helical membrane-spanning segment. Residues 282–330 (SIKHCQFQCGTLRLILQRAIQESPEEEDEEVEEVVEQEGGEEDEESTTL) lie on the Cytoplasmic side of the membrane. A disordered region spans residues 302–330 (QESPEEEDEEVEEVVEQEGGEEDEESTTL). Over residues 304-330 (SPEEEDEEVEEVVEQEGGEEDEESTTL) the composition is skewed to acidic residues.

It belongs to the G-protein coupled receptor 1 family. Mas subfamily.

Its subcellular location is the membrane. Functionally, orphan receptor. Probably involved in the function of nociceptive neurons. May regulate nociceptor function and/or development, including the sensation or modulation of pain. The polypeptide is Mas-related G-protein coupled receptor member B8 (Mrgprb8) (Mus musculus (Mouse)).